A 234-amino-acid chain; its full sequence is Elongation factor Tu, chloroplastic (234 aa).

One can recognise a tr-type G domain in the interval 1 to 125 (KNMITGAAQM…KVDSYIPTPE (125 aa)). GTP is bound at residue 47–50 (NKQD).

This sequence belongs to the TRAFAC class translation factor GTPase superfamily. Classic translation factor GTPase family. EF-Tu/EF-1A subfamily.

The protein localises to the plastid. The protein resides in the chloroplast. It catalyses the reaction GTP + H2O = GDP + phosphate + H(+). Its function is as follows. GTP hydrolase that promotes the GTP-dependent binding of aminoacyl-tRNA to the A-site of ribosomes during protein biosynthesis. In Pandorina morum (Freshwater green alga), this protein is Elongation factor Tu, chloroplastic (tufA).